The following is a 2766-amino-acid chain: Thyroglobulin (2766 aa).

An N-terminal signal peptide occupies residues 1 to 20 (MTALVLWVSTLLSSVCLVAA). At Tyr25 the chain carries Iodotyrosine; alternate. The residue at position 25 (Tyr25) is a Sulfotyrosine; alternate. Tyr25 carries the post-translational modification Thyroxine; alternate. Tyr25 is subject to Triiodothyronine; alternate. Thyroglobulin type-1 domains are found at residues 32–93 (LRPC…PTVC), 94–161 (LSFC…PTRC), 162–298 (PRSC…RFRC), and 299–359 (PTKC…PPSC). Cystine bridges form between Cys35/Cys53, Cys64/Cys71, Cys73/Cys93, Cys97/Cys121, Cys132/Cys139, Cys141/Cys161, Cys165/Cys184, and Cys195/Cys236. An Iodotyrosine modification is found at Tyr109. Asn111 carries N-linked (GlcNAc...) asparagine glycosylation. Tyr150 carries the iodotyrosine; alternate modification. Tyr150 is subject to Diiodotyrosine; alternate. Asn199 carries N-linked (GlcNAc...) asparagine glycosylation. Tyr235 and Tyr259 each carry iodotyrosine. Intrachain disulfides connect Cys302–Cys320, Cys331–Cys337, Cys339–Cys359, Cys365–Cys620, Cys408–Cys608, Cys631–Cys636, Cys638–Cys658, Cys662–Cys687, and Cys698–Cys703. 2 N-linked (GlcNAc...) asparagine glycosylation sites follow: Asn484 and Asn496. Thyroglobulin type-1 domains lie at 605-658 (AQAC…RPRC), 659-726 (PTKC…AKQC), 727-922 (PSVC…IPAC), 923-1074 (PGPC…MPQC), 1075-1146 (PTNC…SAQC), and 1147-1211 (PGLC…QPAC). Tyr704 carries the iodotyrosine; alternate modification. A Thyroxine; alternate modification is found at Tyr704. The residue at position 704 (Tyr704) is a Triiodothyronine; alternate. Diiodotyrosine; alternate is present on Tyr704. 16 disulfides stabilise this stretch: Cys705-Cys726, Cys730-Cys763, Cys774-Cys899, Cys901-Cys922, Cys926-Cys1032, Cys1043-Cys1050, Cys1052-Cys1074, Cys1078-Cys1109, Cys1127-Cys1146, Cys1150-Cys1170, Cys1182-Cys1189, Cys1191-Cys1211, Cys1216-Cys1265, Cys1232-Cys1246, Cys1306-Cys1356, and Cys1331-Cys1347. Residue Asn748 is glycosylated (N-linked (GlcNAc...) asparagine). Tyr785 carries the iodotyrosine modification. Asn817 carries N-linked (GlcNAc...) asparagine glycosylation. Tyr867 is subject to Iodotyrosine; alternate. At Tyr867 the chain carries Diiodotyrosine; alternate. The residue at position 884 (Tyr884) is a Diiodotyrosine. A glycan (N-linked (GlcNAc...) asparagine) is linked at Asn948. Tyr993 carries the post-translational modification Iodotyrosine; alternate. Tyr993 bears the Diiodotyrosine; alternate mark. Asn1141 is a glycosylation site (N-linked (GlcNAc...) asparagine). Tyr1310 carries the post-translational modification Iodotyrosine. Thyroxine is present on Tyr1310. Asn1349 and Asn1365 each carry an N-linked (GlcNAc...) asparagine glycan. Intrachain disulfides connect Cys1441–Cys1458, Cys1461–Cys1472, Cys1475–Cys1489, Cys1492–Cys1509, Cys1513–Cys1522, Cys1542–Cys1564, Cys1602–Cys1626, Cys1606–Cys1612, and Cys1638–Cys1661. Type II repeat units lie at residues 1455–1468 (ALGCVKCPEGSFSQ), 1469–1485 (DGRCTPCPAGTYQEQAG), and 1486–1502 (SSACIPCPRGRTTITTG). A Thyroglobulin type-1 11 domain is found at 1510-1564 (VTDCQKNEAGLQCDQNGQYQASQKNRDSGEVFCVDSEGRKLQWLQTEAGLSESQC). A Type IIIA repeat occupies 1602–1722 (CLTDCANDEA…GANLTDTHTY (121 aa)). Asn1715, Asn1729, Asn1773, and Asn1864 each carry an N-linked (GlcNAc...) asparagine glycan. Disulfide bonds link Cys1723-Cys1748, Cys1727-Cys1733, Cys1732-Cys1834, and Cys1759-Cys1776. Residues 1723–1889 (CLLACDNDSC…LFSAEQANLW (167 aa)) form a Type IIIB repeat. Cystine bridges form between Cys1890/Cys1916, Cys1894/Cys1901, Cys1925/Cys1936, Cys1993/Cys2021, Cys1997/Cys2003, Cys2002/Cys2073, and Cys2032/Cys2045. One copy of the Type IIIA repeat lies at 1890–1992 (CLSRCAQEPI…GKLISNGFFE (103 aa)). The N-linked (GlcNAc...) asparagine glycan is linked to Asn1935. The Type IIIB repeat unit spans residues 1993–2125 (CERLCDRDPC…AATSNFSMAQ (133 aa)). N-linked (GlcNAc...) asparagine glycosylation is present at Asn2010. Asn2120 carries N-linked (GlcNAc...) asparagine glycosylation. The Type IIIA repeat unit spans residues 2126–2183 (DFCLQQCSRHQDCLVTTLQIQPGVVRCVFYPDIQNCIHSLRSHTCWLLLHEEATYIYR). 3 disulfide bridges follow: Cys2128-Cys2152, Cys2132-Cys2138, and Cys2161-Cys2170. Tyr2182 bears the Iodotyrosine mark. Positions 2186–2766 (GIPLVQSDVT…LEPVPKSYSK (581 aa)) are cholinesterase-like (ChEL). The N-linked (GlcNAc...) asparagine glycan is linked to Asn2249. Cysteines 2263 and 2280 form a disulfide. Asn2294 carries N-linked (GlcNAc...) asparagine glycosylation. Cysteines 2441 and 2452 form a disulfide. The residue at position 2539 (Tyr2539) is a Thyroxine. An Iodotyrosine; alternate modification is found at Tyr2572. Tyr2572 carries the thyroxine; alternate modification. Triiodothyronine; alternate is present on Tyr2572. Tyr2572 carries the diiodotyrosine; alternate modification. Asn2581 is a glycosylation site (N-linked (GlcNAc...) asparagine). Iodotyrosine occurs at positions 2586 and 2616. An intrachain disulfide couples Cys2590 to Cys2714. Position 2696 is a diiodotyrosine (Tyr2696). The disordered stretch occupies residues 2729–2766 (GAKDAQLTKSEEEDLEVGPGLEEDLSGSLEPVPKSYSK). Positions 2739 to 2753 (EEEDLEVGPGLEEDL) are enriched in acidic residues. The residue at position 2764 (Tyr2764) is an Iodotyrosine; alternate. The residue at position 2764 (Tyr2764) is a Thyroxine; alternate. Triiodothyronine; alternate is present on Tyr2764. The residue at position 2764 (Tyr2764) is a Diiodotyrosine; alternate.

This sequence belongs to the type-B carboxylesterase/lipase family. Monomer. Homodimer (via ChEL region); occurs in the endoplasmic reticulum and is required for export to the Golgi apparatus. Homooligomer; disulfide-linked; stored in this form in the thyroid follicle lumen. Post-translationally, iodinated on tyrosine residues by TPO. There are 4 pairs of iodinated tyrosines used for coupling: acceptor Tyr-25 is coupled to donor Tyr-150 or Tyr-235, acceptor Tyr-2572 is coupled to donor Tyr-2539, acceptor Tyr-2764 in monomer 1 is coupled to donor Tyr-2764 in monomer 2 and acceptor Tyr-1310 in monomer 1 is coupled to donor Tyr-109 in monomer 2. Sulfated tyrosines are desulfated during iodination. In terms of processing, undergoes sequential proteolysis by cathepsins to release thyroxine (T4) and triiodothyronine (T3) hormones. In the thyroid follicle lumen, cross-linked TG (storage form) is solubilized by limited proteolysis mediated by cathepsins CTSB and/or CTSL. Partially cleaved TG is further processed by CTSK/cathepsin K and/or CTSL resulting in the release of T4. Following endocytosis, further processing occurs leading to the release of T3 and more T4 hormones. As to expression, specifically expressed in the thyroid gland.

The protein localises to the secreted. Functionally, acts as a substrate for the production of iodinated thyroid hormones thyroxine (T4) and triiodothyronine (T3). The synthesis of T3 and T4 involves iodination of selected tyrosine residues of TG/thyroglobulin followed by their oxidative coupling. Following TG re-internalization and lysosomal-mediated proteolysis, T3 and T4 are released from the polypeptide backbone leading to their secretion into the bloodstream. One dimer produces 7 thyroid hormone molecules. This Mus musculus (Mouse) protein is Thyroglobulin (Tg).